Consider the following 411-residue polypeptide: Arginine deiminase (411 aa).

The active-site Amidino-cysteine intermediate is the Cys-401.

The protein belongs to the arginine deiminase family.

The protein localises to the cytoplasm. The enzyme catalyses L-arginine + H2O = L-citrulline + NH4(+). It functions in the pathway amino-acid degradation; L-arginine degradation via ADI pathway; carbamoyl phosphate from L-arginine: step 1/2. The chain is Arginine deiminase from Streptococcus pyogenes serotype M2 (strain MGAS10270).